The chain runs to 254 residues: Homeobox protein Nkx-6.3 (254 aa).

Disordered stretches follow at residues 112-140 (QDWRGGNPALSSASNTEGSSRKKHTRPTF) and 191-228 (KSAVETPGLPSLSTRAPGDLIPSDNEDDEYSKPLDPDS). Over residues 120–129 (ALSSASNTEG) the composition is skewed to polar residues. Residues 133 to 192 (KKHTRPTFTGHQIFALEKTFEQTKYLAGPERARLAFSLGMSESQVKVWFQNRRTKWRKKS) constitute a DNA-binding region (homeobox).

It is found in the nucleus. Functionally, putative transcription factor, which may be involved in patterning of central nervous system and pancreas. This Xenopus laevis (African clawed frog) protein is Homeobox protein Nkx-6.3 (nkx6-3).